Reading from the N-terminus, the 394-residue chain is Stearoyl-[acyl-carrier-protein] 9-desaturase 1, chloroplastic (394 aa).

A chloroplast-targeting transit peptide spans 1–37; sequence MVMAMDRIALFSSSSSVYHHGSSHSHGSKSSRVFTIR. 6 residues coordinate Fe cation: E135, E173, H176, E226, E259, and H262.

Belongs to the fatty acid desaturase type 2 family. As to quaternary structure, homodimer. Fe(2+) is required as a cofactor. As to expression, ubiquitously expressed.

It localises to the plastid. The protein resides in the chloroplast. It catalyses the reaction octadecanoyl-[ACP] + 2 reduced [2Fe-2S]-[ferredoxin] + O2 + 2 H(+) = (9Z)-octadecenoyl-[ACP] + 2 oxidized [2Fe-2S]-[ferredoxin] + 2 H2O. Its pathway is lipid metabolism; fatty acid metabolism. In terms of biological role, converts stearoyl-ACP to oleoyl-ACP by introduction of a cis double bond between carbons 9 and 10 of the acyl chain. The polypeptide is Stearoyl-[acyl-carrier-protein] 9-desaturase 1, chloroplastic (S-ACP-DES1) (Arabidopsis thaliana (Mouse-ear cress)).